A 354-amino-acid chain; its full sequence is Thiamine thiazole synthase (354 aa).

Substrate contacts are provided by residues Ala-83, 104 to 105, Gly-112, and Val-177; that span reads EA. Cys-210 carries the post-translational modification 2,3-didehydroalanine (Cys). Substrate-binding positions include Asp-212, His-227, Met-305, and 315–317; that span reads RMR.

It belongs to the THI4 family. Homooctamer. Fe cation serves as cofactor. In terms of processing, during the catalytic reaction, a sulfide is transferred from Cys-210 to a reaction intermediate, generating a dehydroalanine residue.

Its subcellular location is the cytoplasm. It localises to the nucleus. It catalyses the reaction [ADP-thiazole synthase]-L-cysteine + glycine + NAD(+) = [ADP-thiazole synthase]-dehydroalanine + ADP-5-ethyl-4-methylthiazole-2-carboxylate + nicotinamide + 3 H2O + 2 H(+). Involved in biosynthesis of the thiamine precursor thiazole. Catalyzes the conversion of NAD and glycine to adenosine diphosphate 5-(2-hydroxyethyl)-4-methylthiazole-2-carboxylic acid (ADT), an adenylated thiazole intermediate. The reaction includes an iron-dependent sulfide transfer from a conserved cysteine residue of the protein to a thiazole intermediate. The enzyme can only undergo a single turnover, which suggests it is a suicide enzyme. May have additional roles in adaptation to various stress conditions and in DNA damage tolerance. This is Thiamine thiazole synthase from Candida albicans (strain WO-1) (Yeast).